Here is a 383-residue protein sequence, read N- to C-terminus: MGDQNGNTSFAPDLNPPQDHVSLLPLNYSYGDYDIPLDDDEDVTKTQTFFAAKIVIGVALAGIMLVCGVGNFVFIAALARYKKLRNLTNLLIANLAISDFLVAIVCCPFEMDYYVVRQLSWEHGHVLCASVNYLRTVSLYVSTNALLAIAIDRYLAIVHPLKRMNYQTASFLIALVWMVSILIAIPSAYFTTETILVIVKNQEKLFCGQIWPVDQQLYYKSYFLFVFGLEFVGPVVTMTLCYARISQELWFKAVPGFQTEQIRKRLRCRRKTVLLLMGILTAYVLCWAPFYGFTIVRDFFPTLVVKEKHYLTAFYVVECIAMSNSMINTICFVTVKNNTMKYFKKMLLLHWRPSHYGSKSSADLDLKTSGVPATEEVDCIRLK.

Residues M1 to I54 lie on the Extracellular side of the membrane. N-linked (GlcNAc...) asparagine glycosylation is found at N7 and N27. The helical transmembrane segment at V55–I75 threads the bilayer. Residues A76–N89 lie on the Cytoplasmic side of the membrane. The chain crosses the membrane as a helical span at residues L90–E110. The Extracellular portion of the chain corresponds to M111–T136. Cysteines 128 and 207 form a disulfide. The chain crosses the membrane as a helical span at residues V137–I157. At V158–S170 the chain is on the cytoplasmic side. A helical membrane pass occupies residues F171–T191. The Extracellular portion of the chain corresponds to T192–Y222. The chain crosses the membrane as a helical span at residues F223 to A243. The Cytoplasmic portion of the chain corresponds to R244–T272. A helical transmembrane segment spans residues V273–F293. The Extracellular segment spans residues T294 to T312. A helical membrane pass occupies residues A313–V333. Topologically, residues T334–K383 are cytoplasmic.

Belongs to the G-protein coupled receptor 1 family. Homodimer. In terms of tissue distribution, abundantly expressed in the CNS and reproductive organs with the highest levels in the cerebrum, cerebellum, testis and ovary.

The protein localises to the cell membrane. Its function is as follows. Receptor for prokineticin 2. Exclusively coupled to the G(q) subclass of heteromeric G proteins. Activation leads to mobilization of calcium, stimulation of phosphoinositide turnover and activation of p44/p42 mitogen-activated protein kinase. The sequence is that of Prokineticin receptor 2 (Prokr2) from Rattus norvegicus (Rat).